Here is a 361-residue protein sequence, read N- to C-terminus: Phospho-N-acetylmuramoyl-pentapeptide-transferase (361 aa).

Helical transmembrane passes span Thr-25 to Asp-45, Thr-72 to Ala-92, Leu-95 to Tyr-115, Leu-135 to Gly-155, Val-169 to Gly-189, Gly-200 to Val-220, Leu-240 to Pro-260, Ile-264 to Ala-284, Ile-289 to Val-309, and Gln-338 to Leu-358.

It belongs to the glycosyltransferase 4 family. MraY subfamily. Requires Mg(2+) as cofactor.

It is found in the cell inner membrane. It carries out the reaction UDP-N-acetyl-alpha-D-muramoyl-L-alanyl-gamma-D-glutamyl-meso-2,6-diaminopimeloyl-D-alanyl-D-alanine + di-trans,octa-cis-undecaprenyl phosphate = di-trans,octa-cis-undecaprenyl diphospho-N-acetyl-alpha-D-muramoyl-L-alanyl-D-glutamyl-meso-2,6-diaminopimeloyl-D-alanyl-D-alanine + UMP. It functions in the pathway cell wall biogenesis; peptidoglycan biosynthesis. In terms of biological role, catalyzes the initial step of the lipid cycle reactions in the biosynthesis of the cell wall peptidoglycan: transfers peptidoglycan precursor phospho-MurNAc-pentapeptide from UDP-MurNAc-pentapeptide onto the lipid carrier undecaprenyl phosphate, yielding undecaprenyl-pyrophosphoryl-MurNAc-pentapeptide, known as lipid I. This chain is Phospho-N-acetylmuramoyl-pentapeptide-transferase, found in Rhodopseudomonas palustris (strain HaA2).